A 94-amino-acid polypeptide reads, in one-letter code: Large ribosomal subunit protein bL27 (94 aa).

A propeptide spanning residues 1–9 (MTLNNLQLF) is cleaved from the precursor. The tract at residues 9 to 33 (FAHKKGGGSTSNGRDSQAKRLGAKA) is disordered.

This sequence belongs to the bacterial ribosomal protein bL27 family. The N-terminus is cleaved by ribosomal processing cysteine protease Prp.

The polypeptide is Large ribosomal subunit protein bL27 (Streptococcus pneumoniae serotype 4 (strain ATCC BAA-334 / TIGR4)).